Here is a 219-residue protein sequence, read N- to C-terminus: Ribose-5-phosphate isomerase A (219 aa).

Substrate is bound by residues 28-31, 81-84, and 94-97; these read TGST, DGAD, and KGGG. The active-site Proton acceptor is the Glu-103. Lys-121 is a binding site for substrate.

It belongs to the ribose 5-phosphate isomerase family. Homodimer.

The enzyme catalyses aldehydo-D-ribose 5-phosphate = D-ribulose 5-phosphate. Its pathway is carbohydrate degradation; pentose phosphate pathway; D-ribose 5-phosphate from D-ribulose 5-phosphate (non-oxidative stage): step 1/1. Functionally, catalyzes the reversible conversion of ribose-5-phosphate to ribulose 5-phosphate. The sequence is that of Ribose-5-phosphate isomerase A from Shigella boydii serotype 18 (strain CDC 3083-94 / BS512).